Reading from the N-terminus, the 523-residue chain is Calcium uptake protein 3, mitochondrial (523 aa).

The N-terminal 6 residues, 1–6 (MAALRR), are a transit peptide targeting the mitochondrion. One can recognise an EF-hand 1 domain in the interval 226 to 261 (PHAGFRIAFNMFDTDGNEMVDKKEFLVLQEIFRKKN). Ca(2+)-binding residues include Asp238, Asp240, Asn242, Met244, Asp246, and Glu249. Residues 395 to 430 (ENTSVFLENVRYSISEEKGITFDEFRSFFQFLNNLE) form the EF-hand 2; degenerate domain. An EF-hand 3 domain is found at 464-499 (SPHLVNTVFKIFDVDKDDQLSYKEFIGIMKDRLHRG). 5 residues coordinate Ca(2+): Asp476, Asp478, Asp480, Gln482, and Glu487.

Belongs to the MICU1 family. MICU3 subfamily. Heterodimer; disulfide-linked; heterodimerizes with MICU1. Heterodimerizes with isoform 3 of MICU1 (MICU1.1) in skeletal muscle. Component of the uniplex complex, composed of MCU, EMRE/SMDT1, MICU1 and MICU3 in a 4:4:1:1 stoichiometry. As to expression, predominantly expressed in skeletal muscle and central nervous system.

The protein localises to the mitochondrion intermembrane space. Its subcellular location is the mitochondrion inner membrane. Tissue-specific calcium sensor of the mitochondrial calcium uniporter (MCU) channel, which specifically regulates MCU channel activity in the central nervous system and skeletal muscle. Senses calcium level via its EF-hand domains: compared to MICU1 and MICU2, MICU3 has a higher affinity for calcium. MICU1 and MICU3 form a disulfide-linked heterodimer that stimulates and inhibits MCU activity, depending on the concentration of calcium. At low calcium levels, MICU1 occludes the pore of the MCU channel, preventing mitochondrial calcium uptake. At higher calcium levels, calcium-binding to MICU1 and MICU3 induces a conformational change that weakens MCU-MICU1 interactions and moves the MICU1-MICU3 heterodimer away from the pore, allowing calcium permeation through the MCU channel. The high calcium affinity of MICU3 lowers the calcium threshold necessary for calcium permeation through the MCU channel. The MICU1-MICU3 heterodimer promotes flexibility of neurotransmission in neuronal cells by enhancing mitochondrial calcium uptake in presynapses. It is also required to increase mitochondrial calcium uptake in skeletal muscle cells, thereby increasing ATP production. The protein is Calcium uptake protein 3, mitochondrial of Mus musculus (Mouse).